Reading from the N-terminus, the 640-residue chain is ESX-3 secretion system protein EccA3 (640 aa).

Gly393–Thr400 is an ATP binding site.

It belongs to the CbxX/CfxQ family. In terms of assembly, part of the ESX-3 / type VII secretion system (T7SS), which is composed of cytosolic and membrane components.

The protein localises to the cytoplasm. In terms of biological role, part of an ESX-3 / type VII specialized secretion system (T7SS), which exports several proteins. EccA3 exhibits ATPase activity and may provide energy for the export of ESX-3 substrates. The chain is ESX-3 secretion system protein EccA3 from Mycobacterium leprae (strain TN).